Consider the following 842-residue polypeptide: Elongation factor 2 (842 aa).

The 237-residue stretch at 17–253 folds into the tr-type G domain; it reads TNVRNMSVIA…LWGDSYFNPK (237 aa). GTP-binding positions include 26–33, 158–161, and 213–215; these read AHVDHGKS, NKVD, and SGL. His-699 carries the diphthamide modification.

It belongs to the TRAFAC class translation factor GTPase superfamily. Classic translation factor GTPase family. EF-G/EF-2 subfamily.

The protein resides in the cytoplasm. The enzyme catalyses GTP + H2O = GDP + phosphate + H(+). Functionally, catalyzes the GTP-dependent ribosomal translocation step during translation elongation. During this step, the ribosome changes from the pre-translocational (PRE) to the post-translocational (POST) state as the newly formed A-site-bound peptidyl-tRNA and P-site-bound deacylated tRNA move to the P and E sites, respectively. Catalyzes the coordinated movement of the two tRNA molecules, the mRNA and conformational changes in the ribosome. The polypeptide is Elongation factor 2 (EFT1) (Naumovozyma castellii (Yeast)).